A 290-amino-acid polypeptide reads, in one-letter code: MSTLAIDIGGTKLAAARVDDDLRIRERRELPTPASKTPDALREALKVLVEPLQTTAQRVAIASTGIIREGALLAINPHNLGGLLHFPLVPTLEDLTGLPTLAVNDAQAAAWAEYHALASDVRDMVFITVSTGVGGGVVSDGRLLTGMSGLAGHLGHTLADPQGPVCGCGRRGCVEAIASGRGIAAAAQGSLAGCDARTVFAHAAAGNEQAVRLVQHSAQVVARLIADVKATTDCQQVVIGGSVGLAEGYLAQVRHFLAQEPAVYQVALSAAHYRHDAGLLGAALLAQGDK.

Residues 5–12 (AIDIGGTK) and 132–139 (GVGGGVVS) each bind ATP. Zn(2+) contacts are provided by His-156, Cys-166, Cys-168, and Cys-173.

It belongs to the ROK (NagC/XylR) family. NanK subfamily. Homodimer.

It catalyses the reaction an N-acyl-D-mannosamine + ATP = an N-acyl-D-mannosamine 6-phosphate + ADP + H(+). The protein operates within amino-sugar metabolism; N-acetylneuraminate degradation; D-fructose 6-phosphate from N-acetylneuraminate: step 2/5. Catalyzes the phosphorylation of N-acetylmannosamine (ManNAc) to ManNAc-6-P. The chain is N-acetylmannosamine kinase from Citrobacter koseri (strain ATCC BAA-895 / CDC 4225-83 / SGSC4696).